Here is an 84-residue protein sequence, read N- to C-terminus: MRIDKFLQSVGLVKRRVLATDMCNVGAVWLNGSCAKASKEVKAGDTISLHYLKGIEEYTILQIPALKNVPRKDTHLYIAPKTKE.

In terms of domain architecture, S4 RNA-binding spans 1–64; it reads MRIDKFLQSV…IEEYTILQIP (64 aa).

This sequence belongs to the RqcP family. Associates with stalled 50S ribosomal subunits. Binds to RqcH, 23S rRNA and the P-site tRNA. Does not require RqcH for association with 50S subunits.

Key component of the ribosome quality control system (RQC), a ribosome-associated complex that mediates the extraction of incompletely synthesized nascent chains from stalled ribosomes and their subsequent degradation. RqcH recruits Ala-charged tRNA, and with RqcP directs the elongation of stalled nascent chains on 50S ribosomal subunits, leading to non-templated C-terminal alanine extensions (Ala tail). The Ala tail promotes nascent chain degradation. RqcP is associated with the translocation-like movement of the peptidyl-tRNA from the A-site into the P-site. This is RQC P-site tRNA stabilizing factor from Helicobacter pylori (strain ATCC 700392 / 26695) (Campylobacter pylori).